A 440-amino-acid polypeptide reads, in one-letter code: Thymidine phosphorylase (440 aa).

It belongs to the thymidine/pyrimidine-nucleoside phosphorylase family. Homodimer.

It catalyses the reaction thymidine + phosphate = 2-deoxy-alpha-D-ribose 1-phosphate + thymine. The protein operates within pyrimidine metabolism; dTMP biosynthesis via salvage pathway; dTMP from thymine: step 1/2. The enzymes which catalyze the reversible phosphorolysis of pyrimidine nucleosides are involved in the degradation of these compounds and in their utilization as carbon and energy sources, or in the rescue of pyrimidine bases for nucleotide synthesis. This Proteus mirabilis (strain HI4320) protein is Thymidine phosphorylase.